We begin with the raw amino-acid sequence, 370 residues long: Pantothenate kinase 3 (370 aa).

E138 serves as the catalytic Proton acceptor. Acetyl-CoA-binding residues include S192, S195, and R207.

The protein belongs to the type II pantothenate kinase family. Homodimer.

It localises to the cytoplasm. It carries out the reaction (R)-pantothenate + ATP = (R)-4'-phosphopantothenate + ADP + H(+). It functions in the pathway cofactor biosynthesis; coenzyme A biosynthesis; CoA from (R)-pantothenate: step 1/5. With respect to regulation, subject to allosteric regulation, exists in two distinct conformational states, a catalytically incompetent (or open) conformation stabilized by the binding of acetyl(acyl)-CoA, and a catalytically competent (or closed) conformation stabilized by ATP-binding. Inhibited by acetyl-CoA and its thioesters which act as allosteric inhibitors and compete with the ATP-binding site. Its function is as follows. Catalyzes the phosphorylation of pantothenate to generate 4'-phosphopantothenate in the first and rate-determining step of coenzyme A (CoA) synthesis. In Bos taurus (Bovine), this protein is Pantothenate kinase 3 (PANK3).